A 216-amino-acid polypeptide reads, in one-letter code: Refilin-A (216 aa).

Residues 1-83 (MVGHLHLQGM…LPNPPASEMR (83 aa)) form a disordered region. Residues 12–22 (DSLKEQGREGL) show a composition bias toward basic and acidic residues. Positions 29–39 (GLPPSPSPSPP) are enriched in pro residues. Positions 57-71 (ASSEPPGPSEARAPP) are enriched in low complexity. Position 163 is an asymmetric dimethylarginine (Arg163).

Belongs to the Refilin family. In terms of assembly, interacts with FLNA and FLNB.

It is found in the cytoplasm. The protein resides in the cytoskeleton. Functionally, involved in the regulation of the perinuclear actin network and nuclear shape through interaction with filamins. Plays an essential role in actin cytoskeleton formation in developing cartilaginous cells. The protein is Refilin-A of Homo sapiens (Human).